The following is a 180-amino-acid chain: Large ribosomal subunit protein uL5 (180 aa).

It belongs to the universal ribosomal protein uL5 family. In terms of assembly, part of the 50S ribosomal subunit; part of the 5S rRNA/L5/L18/L25 subcomplex. Contacts the 5S rRNA and the P site tRNA. Forms a bridge to the 30S subunit in the 70S ribosome.

In terms of biological role, this is one of the proteins that bind and probably mediate the attachment of the 5S RNA into the large ribosomal subunit, where it forms part of the central protuberance. In the 70S ribosome it contacts protein S13 of the 30S subunit (bridge B1b), connecting the 2 subunits; this bridge is implicated in subunit movement. Contacts the P site tRNA; the 5S rRNA and some of its associated proteins might help stabilize positioning of ribosome-bound tRNAs. The sequence is that of Large ribosomal subunit protein uL5 from Lactobacillus acidophilus (strain ATCC 700396 / NCK56 / N2 / NCFM).